A 312-amino-acid polypeptide reads, in one-letter code: MCLDDKQQGMVFNIQKYSVHDGPGIRTIVFLKGCSLSCRWCSNPESQKSCAELACNPGRCIDISKCGHCLTACPHGAITCGDDDKPRIDRSHCADCSIPCAEVCPAQGLLVYGKKRAVGDVLRVVEQDMAFYARSGGGLTLSGGEPLLQGSFAVALLREARARRIRTAVETCGMVPADTVREAAPHLSYVLYDIKHMNSEIHETQTGLPNARILENFRILAEEFPHLPILARTPVIPGFNDNEKAVAAIARFIKAYPHVNYELLPYHRLGTQKYHFLGREVPMGEVSLNKAVTDGLQKTALDILGERVQIPR.

Residues 20–304 (HDGPGIRTIV…GLQKTALDIL (285 aa)) enclose the Radical SAM core domain. [4Fe-4S] cluster-binding residues include Cys-34, Cys-38, Cys-41, Cys-60, Cys-66, Cys-69, Cys-73, Cys-93, Cys-96, Cys-100, and Cys-104. Position 40–42 (40–42 (WCS)) interacts with S-adenosyl-L-methionine. 4Fe-4S ferredoxin-type domains are found at residues 51–83 (AELA…CGDD) and 84–115 (DKPR…YGKK). S-adenosyl-L-methionine-binding positions include Gly-144, 193–195 (DIK), and His-267.

Belongs to the organic radical-activating enzymes family. Monomer. The cofactor is [4Fe-4S] cluster.

The catalysed reaction is glycyl-[protein] + reduced [flavodoxin] + S-adenosyl-L-methionine = glycin-2-yl radical-[protein] + semiquinone [flavodoxin] + 5'-deoxyadenosine + L-methionine + H(+). It participates in organosulfur degradation; alkanesulfonate degradation. Its function is as follows. Involved in an anaerobic respiration pathway that converts the sulfonate isethionate (2-hydroxyethanesulfonate) to ammonia, acetate and sulfide. Catalyzes activation of the isethionate sulfite-lyase IslA under anaerobic conditions by generation of an organic free radical on a glycine residue, via a homolytic cleavage of S-adenosyl-L-methionine (SAM). The sequence is that of Isethionate sulfite-lyase activating enzyme from Desulfovibrio desulfuricans (strain ATCC 27774 / DSM 6949 / MB).